The sequence spans 447 residues: Protein cortex (447 aa).

6 WD repeats span residues 108 to 148 (TYSY…IGHG), 149 to 188 (FAEYEIQCCKFDPRGELLALGTYMKTLEIHNNSKSKKIMS), 198 to 237 (NMNCSITAVDWSPTGNSFAAGCSGGAVTSFTRAAKLISWR), 281 to 325 (DSDW…VRDT), 344 to 380 (GELVLSMWHSDRATLHPKTCSQLVVLSDPDTMVDQWG), and 384 to 423 (SGLDRVRTMIFSPDGTKLATATTDEDLIIWNFLPEDNKMK). Positions 384-395 (SGLDRVRTMIFS) match the D-box motif.

This sequence belongs to the WD repeat CORT family.

The protein localises to the cytoplasm. Functionally, controls wing pigmentation patterning by regulating scale cell development, thereby playing a key role in mimicry and crypsis. Probably acts as an activator of the anaphase promoting complex/cyclosome (APC/C) that promotes the ubiquitin ligase activity and substrate specificity of the APC/C. The chain is Protein cortex from Heliconius melpomene (Postman butterfly).